The chain runs to 38 residues: Photosystem II reaction center protein L (38 aa).

A helical membrane pass occupies residues 17 to 37 (SLYWGLLLIXVLAVLFSNYFF).

Belongs to the PsbL family. As to quaternary structure, PSII is composed of 1 copy each of membrane proteins PsbA, PsbB, PsbC, PsbD, PsbE, PsbF, PsbH, PsbI, PsbJ, PsbK, PsbL, PsbM, PsbT, PsbX, PsbY, PsbZ, Psb30/Ycf12, at least 3 peripheral proteins of the oxygen-evolving complex and a large number of cofactors. It forms dimeric complexes.

The protein resides in the plastid. It localises to the chloroplast thylakoid membrane. In terms of biological role, one of the components of the core complex of photosystem II (PSII). PSII is a light-driven water:plastoquinone oxidoreductase that uses light energy to abstract electrons from H(2)O, generating O(2) and a proton gradient subsequently used for ATP formation. It consists of a core antenna complex that captures photons, and an electron transfer chain that converts photonic excitation into a charge separation. This subunit is found at the monomer-monomer interface and is required for correct PSII assembly and/or dimerization. This is Photosystem II reaction center protein L from Allium textile (Textile onion).